A 118-amino-acid chain; its full sequence is U-scoloptoxin(05)-Cw1a (118 aa).

Positions 1–22 (MNPLNLSTFIVFTLFAASATTA) are cleaved as a signal peptide.

Belongs to the scoloptoxin-05 family. Contains 5 disulfide bonds. As to expression, expressed by the venom gland.

The protein localises to the secreted. The chain is U-scoloptoxin(05)-Cw1a from Cormocephalus westwoodi (Westwood's green centipede).